The chain runs to 314 residues: tRNA dimethylallyltransferase (314 aa).

12 to 19 (GPTASGKT) contacts ATP. 14–19 (TASGKT) contacts substrate. Interaction with substrate tRNA regions lie at residues 37-40 (DSAL), 161-165 (QRINR), 242-247 (RCVGYR), and 275-282 (KRQITWLR).

It belongs to the IPP transferase family. As to quaternary structure, monomer. Requires Mg(2+) as cofactor.

The catalysed reaction is adenosine(37) in tRNA + dimethylallyl diphosphate = N(6)-dimethylallyladenosine(37) in tRNA + diphosphate. Functionally, catalyzes the transfer of a dimethylallyl group onto the adenine at position 37 in tRNAs that read codons beginning with uridine, leading to the formation of N6-(dimethylallyl)adenosine (i(6)A). This Mannheimia succiniciproducens (strain KCTC 0769BP / MBEL55E) protein is tRNA dimethylallyltransferase.